Consider the following 368-residue polypeptide: DNA replication and repair protein RecF (368 aa).

Position 30-37 (30-37 (GNNAQGKT)) interacts with ATP.

The protein belongs to the RecF family.

The protein resides in the cytoplasm. Its function is as follows. The RecF protein is involved in DNA metabolism; it is required for DNA replication and normal SOS inducibility. RecF binds preferentially to single-stranded, linear DNA. It also seems to bind ATP. The polypeptide is DNA replication and repair protein RecF (Streptococcus pyogenes serotype M4 (strain MGAS10750)).